Consider the following 237-residue polypeptide: Probable transcriptional regulatory protein Fjoh_2560 (237 aa).

The protein belongs to the TACO1 family.

It localises to the cytoplasm. The sequence is that of Probable transcriptional regulatory protein Fjoh_2560 from Flavobacterium johnsoniae (strain ATCC 17061 / DSM 2064 / JCM 8514 / BCRC 14874 / CCUG 350202 / NBRC 14942 / NCIMB 11054 / UW101) (Cytophaga johnsonae).